The sequence spans 779 residues: Protocadherin beta-8 (779 aa).

A signal peptide spans 1 to 28 (METALTKTPEKRQVIFLAILLLLWEASS). At 29–690 (EAISYSMPEE…QEEDMLTLYL (662 aa)) the chain is on the extracellular side. 5 consecutive Cadherin domains span residues 75–133 (LQLD…FPEF), 134–242 (PDTE…APQF), 243–346 (LQSL…APKL), 347–450 (TISS…APAF), and 451–560 (TQTS…APFV). Residues Cys-96 and Cys-102 are joined by a disulfide bond. Asn-169 carries an N-linked (GlcNAc...) asparagine glycan. Ser-223 carries O-linked (Man) serine glycosylation. Thr-225 and Thr-227 each carry an O-linked (Man) threonine glycan. N-linked (GlcNAc...) asparagine glycosylation is present at Asn-417. An N-linked (GlcNAc...) asparagine glycan is attached at Asn-566. A Cadherin 6 domain is found at 575–675 (LPRAAEPGYL…SQPYLPLPEV (101 aa)). A helical transmembrane segment spans residues 691–711 (VIALASVSSLFLLSVLLFVGV). Over 712-779 (KLCKKAREAS…IIPSSLLQDS (68 aa)) the chain is Cytoplasmic.

Forms homodimers in trans (molecules expressed by two different cells). Forms promiscuous heterodimers in cis (at the plasma membrane of the same cell) with other protocadherins.

It is found in the cell membrane. Calcium-dependent cell-adhesion protein involved in cells self-recognition and non-self discrimination. Thereby, it is involved in the establishment and maintenance of specific neuronal connections in the brain. The chain is Protocadherin beta-8 from Mus musculus (Mouse).